We begin with the raw amino-acid sequence, 327 residues long: Opticin (327 aa).

A signal peptide spans 1–19 (MKLPAFLSLLALVLLEAGT). Sulfotyrosine occurs at positions 61 and 67. The LRRNT domain maps to 111–148 (VLGSPNSHGLPTCLICVCLGSSVYCDDADLENIPPLPK). LRR repeat units follow at residues 149–170 (TTTY…DFKG), 173–194 (KLKR…ALRL), 197–218 (ALQD…PPAI), 219–237 (EVLD…QPEA), 243–263 (KLQF…PLPP), 264–285 (SLRS…AFCD), and 295–315 (WLED…PSAY). Cysteine 284 and cysteine 317 form a disulfide bridge.

This sequence belongs to the small leucine-rich proteoglycan (SLRP) family. SLRP class III subfamily. Homodimer. In terms of processing, O-glycosylated. Proteolytically cleaved by MMP1, MMP2, MMP3, MMP7, MMP8, MMP9, ADAMTS4, and ADAMTS5. Proteolytically cleaved by MMP13. Post-translationally, sulfated on tyrosine residues. In terms of tissue distribution, ocular tissues, cartilage, ligament, skin, muscle and testes.

Its subcellular location is the secreted. It is found in the extracellular space. The protein resides in the extracellular matrix. In terms of biological role, inhibits angiogenesis in the vitreous humor of the eye, and therefore represses neovascularization. Binds collagen fibrils. May be involved in collagen fiber organization via regulation of other members of the small leucine-rich repeat proteoglycan superfamily. This Canis lupus familiaris (Dog) protein is Opticin (OPTC).